Consider the following 224-residue polypeptide: MKRFIVRAVLILVSFVLLIQLWIFCSLAWWRTHPVETTMFMRLDYWSDSSKPIQQQWRDYDEISDNFKKAVVAAEDGKFVHHHGFDWEGIQYALEKNEKSGEVVNGGSTISQQLAKNLFLYNQRSLIRKGQEAIATWMMERMWSKQRILEVYMNSVQFGDHLYGVEAASHYYFHRSAQNLTRDQAAFLAALLPNPKYYQENRNDPRFKFKKRFTLKYMRYSEIP.

A helical membrane pass occupies residues 9–29 (VLILVSFVLLIQLWIFCSLAW).

It belongs to the glycosyltransferase 51 family.

Its subcellular location is the cell inner membrane. The catalysed reaction is [GlcNAc-(1-&gt;4)-Mur2Ac(oyl-L-Ala-gamma-D-Glu-L-Lys-D-Ala-D-Ala)](n)-di-trans,octa-cis-undecaprenyl diphosphate + beta-D-GlcNAc-(1-&gt;4)-Mur2Ac(oyl-L-Ala-gamma-D-Glu-L-Lys-D-Ala-D-Ala)-di-trans,octa-cis-undecaprenyl diphosphate = [GlcNAc-(1-&gt;4)-Mur2Ac(oyl-L-Ala-gamma-D-Glu-L-Lys-D-Ala-D-Ala)](n+1)-di-trans,octa-cis-undecaprenyl diphosphate + di-trans,octa-cis-undecaprenyl diphosphate + H(+). It functions in the pathway cell wall biogenesis; peptidoglycan biosynthesis. Its function is as follows. Peptidoglycan polymerase that catalyzes glycan chain elongation from lipid-linked precursors. The polypeptide is Biosynthetic peptidoglycan transglycosylase (Acinetobacter baylyi (strain ATCC 33305 / BD413 / ADP1)).